The sequence spans 252 residues: Insulin-induced gene 1 protein (252 aa).

The Cytoplasmic portion of the chain corresponds to 1–59; it reads MPRLESGAWSCSCAARARHAARPGEAAPKADAMQSPSPSAGRAEREASGGSATTWRQHL. The segment at 22–48 is disordered; the sequence is RPGEAAPKADAMQSPSPSAGRAEREAS. A helical transmembrane segment spans residues 60–82; the sequence is VQRSVVLFVVGAFMALVLNLLQI. Residues 83 to 101 lie on the Extracellular side of the membrane; sequence QRNVTLFPDEVIATLFSSA. The chain crosses the membrane as a helical span at residues 102-119; that stretch reads WWVPPCCGTAAAVVGLLY. The Cytoplasmic portion of the chain corresponds to 120–134; sequence PCIDSHLGEPHKFKR. A helical membrane pass occupies residues 135–157; the sequence is EWASVMRCIAVFVGINHASAKLD. Over 158 to 160 the chain is Extracellular; it reads FAN. Residues 161 to 179 form a helical membrane-spanning segment; sequence NVQLSLTLAALSLGLWWTF. Residues 180 to 184 lie on the Cytoplasmic side of the membrane; the sequence is DRSRS. The chain crosses the membrane as a helical span at residues 185–206; that stretch reads GLGLGITIAFVATLITQFLVYN. The Extracellular portion of the chain corresponds to 207-220; that stretch reads GVYQYTSPDFLYIR. A helical membrane pass occupies residues 221–238; it reads SWLPCIFFSGGVTVGNIG. Over 239-252 the chain is Cytoplasmic; the sequence is RQLAMGIPEKPHND. The KxHxx motif lies at 246–252; that stretch reads PEKPHND.

The protein belongs to the INSIG family. As to quaternary structure, interacts with SCAP; interaction is direct and only takes place in the presence of sterols; it prevents interaction between SCAP and the coat protein complex II (COPII). Associates with the SCAP-SREBP complex; association is mediated via its interaction with SCAP and only takes place in the presence of sterols.

The protein localises to the endoplasmic reticulum membrane. Functionally, oxysterol-binding protein that mediates feedback control of cholesterol synthesis by controlling both endoplasmic reticulum to Golgi transport of SCAP and degradation of HMGCR. Acts as a negative regulator of cholesterol biosynthesis by mediating the retention of the SCAP-SREBP complex in the endoplasmic reticulum, thereby blocking the processing of sterol regulatory element-binding proteins (SREBPs). Binds oxysterol, including 25-hydroxycholesterol, regulating interaction with SCAP and retention of the SCAP-SREBP complex in the endoplasmic reticulum. In presence of oxysterol, interacts with SCAP, retaining the SCAP-SREBP complex in the endoplasmic reticulum, thereby preventing SCAP from escorting SREBPs to the Golgi. Sterol deprivation reduces oxysterol-binding, disrupting the interaction between INSIG1 and SCAP, thereby promoting Golgi transport of the SCAP-SREBP complex, followed by processing and nuclear translocation of SREBPs. Also regulates cholesterol synthesis by regulating degradation of HMGCR. In Gallus gallus (Chicken), this protein is Insulin-induced gene 1 protein.